The chain runs to 99 residues: Ferredoxin-2 (99 aa).

Residues 4-96 (YQVRLINKKR…DCTIRTHQEA (93 aa)) enclose the 2Fe-2S ferredoxin-type domain. [2Fe-2S] cluster-binding residues include C42, C47, C50, and C80.

It belongs to the 2Fe2S plant-type ferredoxin family. [2Fe-2S] cluster is required as a cofactor.

In terms of biological role, ferredoxins are iron-sulfur proteins that transfer electrons in a wide variety of metabolic reactions. Donates electrons to the nitrogenase. The chain is Ferredoxin-2 (fdxH) from Leptolyngbya boryana (Plectonema boryanum).